Reading from the N-terminus, the 303-residue chain is MNWITNYVRPRINSMLGRREVPENLWIKCPETGEMVFHKDLEDNKWVIPASGFHMKMPAKARLADLFDKGEYEALQQPKVAQDPLKFRDSKKYTDRLKDSRVKTDQEDTIVAGVGKVRGLKLVAVVHEFNFMGGSLGIAAGEAIVKAFERAIAEKCPLVMFPASGGARMQEGILSLMQLPRTTVAVDMLKEAGQPYIVVLTNPTTGGVTASYAMLGDVHLAEPGAEICFAGKRVIEQTIREKLPEGFQTSEYLLEHGMVDMVVKRHDIPDTLATLLKILTKAPANDVSAKSLNGAAAPLVANG.

Positions Leu-25–Gly-294 constitute a CoA carboxyltransferase N-terminal domain.

This sequence belongs to the AccD/PCCB family. Acetyl-CoA carboxylase is a heterohexamer composed of biotin carboxyl carrier protein (AccB), biotin carboxylase (AccC) and two subunits each of ACCase subunit alpha (AccA) and ACCase subunit beta (AccD).

The protein resides in the cytoplasm. The catalysed reaction is N(6)-carboxybiotinyl-L-lysyl-[protein] + acetyl-CoA = N(6)-biotinyl-L-lysyl-[protein] + malonyl-CoA. The protein operates within lipid metabolism; malonyl-CoA biosynthesis; malonyl-CoA from acetyl-CoA: step 1/1. Its function is as follows. Component of the acetyl coenzyme A carboxylase (ACC) complex. Biotin carboxylase (BC) catalyzes the carboxylation of biotin on its carrier protein (BCCP) and then the CO(2) group is transferred by the transcarboxylase to acetyl-CoA to form malonyl-CoA. This chain is Acetyl-coenzyme A carboxylase carboxyl transferase subunit beta, found in Rhizobium rhizogenes (strain K84 / ATCC BAA-868) (Agrobacterium radiobacter).